Here is a 445-residue protein sequence, read N- to C-terminus: Exodeoxyribonuclease 7 large subunit (445 aa).

This sequence belongs to the XseA family. As to quaternary structure, heterooligomer composed of large and small subunits.

The protein localises to the cytoplasm. It carries out the reaction Exonucleolytic cleavage in either 5'- to 3'- or 3'- to 5'-direction to yield nucleoside 5'-phosphates.. Functionally, bidirectionally degrades single-stranded DNA into large acid-insoluble oligonucleotides, which are then degraded further into small acid-soluble oligonucleotides. In Xanthomonas oryzae pv. oryzae (strain MAFF 311018), this protein is Exodeoxyribonuclease 7 large subunit.